The primary structure comprises 115 residues: UPF0102 protein Kole_1919 (115 aa).

It belongs to the UPF0102 family.

This is UPF0102 protein Kole_1919 from Kosmotoga olearia (strain ATCC BAA-1733 / DSM 21960 / TBF 19.5.1).